Reading from the N-terminus, the 186-residue chain is FMN-dependent NADH:quinone oxidoreductase 1 (186 aa).

FMN contacts are provided by residues 15–17 and 81–84; these read SVS and MYNF.

Belongs to the azoreductase type 1 family. Homodimer. FMN is required as a cofactor.

It carries out the reaction 2 a quinone + NADH + H(+) = 2 a 1,4-benzosemiquinone + NAD(+). The catalysed reaction is N,N-dimethyl-1,4-phenylenediamine + anthranilate + 2 NAD(+) = 2-(4-dimethylaminophenyl)diazenylbenzoate + 2 NADH + 2 H(+). Quinone reductase that provides resistance to thiol-specific stress caused by electrophilic quinones. In terms of biological role, also exhibits azoreductase activity. Catalyzes the reductive cleavage of the azo bond in aromatic azo compounds to the corresponding amines. This is FMN-dependent NADH:quinone oxidoreductase 1 from Idiomarina loihiensis (strain ATCC BAA-735 / DSM 15497 / L2-TR).